The chain runs to 61 residues: Large ribosomal subunit protein uL30 (61 aa).

This sequence belongs to the universal ribosomal protein uL30 family. In terms of assembly, part of the 50S ribosomal subunit.

This Corynebacterium efficiens (strain DSM 44549 / YS-314 / AJ 12310 / JCM 11189 / NBRC 100395) protein is Large ribosomal subunit protein uL30.